The sequence spans 254 residues: MTTEHSQSKKTIDFGFSEVPLEEKVKKVKGVFDSVAGNYDIMNDVMSFGIHRLWKRHAIELSGIRPGNVVLDLAGGTGDLTKAFAKRVGKTGRVVLADINESMVRVGRDRLTNEGIIGNVDYTITNAEALTYPDNTFDLVTISFGLRNVTNKDKALEEIYRVLKPGGQLMVLEFSKVTQPLLAKAYDFYSFNILPKMGKLIADDEASYQYLAESIRMHPDQETLKKMMLEAGFDKAEYLNMSEGIVALHRGWKY.

Residues threonine 77, aspartate 98, 126 to 127 (NA), and serine 143 each bind S-adenosyl-L-methionine.

It belongs to the class I-like SAM-binding methyltransferase superfamily. MenG/UbiE family.

The catalysed reaction is a 2-demethylmenaquinol + S-adenosyl-L-methionine = a menaquinol + S-adenosyl-L-homocysteine + H(+). The enzyme catalyses a 2-methoxy-6-(all-trans-polyprenyl)benzene-1,4-diol + S-adenosyl-L-methionine = a 5-methoxy-2-methyl-3-(all-trans-polyprenyl)benzene-1,4-diol + S-adenosyl-L-homocysteine + H(+). The protein operates within quinol/quinone metabolism; menaquinone biosynthesis; menaquinol from 1,4-dihydroxy-2-naphthoate: step 2/2. Its pathway is cofactor biosynthesis; ubiquinone biosynthesis. Functionally, methyltransferase required for the conversion of demethylmenaquinol (DMKH2) to menaquinol (MKH2) and the conversion of 2-polyprenyl-6-methoxy-1,4-benzoquinol (DDMQH2) to 2-polyprenyl-3-methyl-6-methoxy-1,4-benzoquinol (DMQH2). The protein is Ubiquinone/menaquinone biosynthesis C-methyltransferase UbiE of Hydrogenovibrio crunogenus (strain DSM 25203 / XCL-2) (Thiomicrospira crunogena).